Reading from the N-terminus, the 230-residue chain is Heptaprenylglyceryl phosphate synthase (230 aa).

Lys12 is a sn-glycerol 1-phosphate binding site. Mg(2+) contacts are provided by Asp14 and Thr40. Residues 159–164, Gly189, and 209–210 contribute to the sn-glycerol 1-phosphate site; these read YIEYSG and GD.

The protein belongs to the GGGP/HepGP synthase family. Group I subfamily. As to quaternary structure, homodimer. Requires Mg(2+) as cofactor.

The enzyme catalyses sn-glycerol 1-phosphate + all-trans-heptaprenyl diphosphate = 3-heptaprenyl-sn-glycero-1-phosphate + diphosphate. The protein operates within membrane lipid metabolism; glycerophospholipid metabolism. Functionally, prenyltransferase that catalyzes in vivo the transfer of the heptaprenyl moiety of heptaprenyl pyrophosphate (HepPP; 35 carbon atoms) to the C3 hydroxyl of sn-glycerol-1-phosphate (G1P), producing heptaprenylglyceryl phosphate (HepGP). This reaction is an ether-bond-formation step in the biosynthesis of archaea-type G1P-based membrane lipids found in Bacillales. This is Heptaprenylglyceryl phosphate synthase from Staphylococcus aureus (strain bovine RF122 / ET3-1).